Reading from the N-terminus, the 394-residue chain is Zinc-regulated GTPase metalloprotein activator 1 (394 aa).

The psi-PxLVp motif signature appears at 16-23; the sequence is EDCPELVP. A GTP-binding site is contributed by 48 to 55; sequence GYLGAGKT. 3 residues coordinate Zn(2+): C106, C108, and C109. Positions 106 to 109 match the CXCC motif motif; sequence CLCC. GTP contacts are provided by residues 109-113 and 202-205; these read CSVKD and NKTD. The CobW C-terminal domain occupies 272–375; it reads IVTVTFDVPG…ILQQLFITAV (104 aa).

It belongs to the SIMIBI class G3E GTPase family. ZNG1 subfamily.

It localises to the nucleus. It catalyses the reaction GTP + H2O = GDP + phosphate + H(+). Zinc chaperone that directly transfers zinc cofactor to target metalloproteins, thereby activating them. Catalyzes zinc insertion into the active site of methionine aminopeptidase METAP1, which function to cleave the initiator methionine from polypeptides during or after protein translation. Mechanistically, the N-terminal psi-PxLVp motif binds to the C6H2-type zinc finger of inactive form of METAP1. After formation of the docked complex, zinc is transferred from the CXCC motif in the GTPase domain of ZNG1 to the zinc binding site in the peptidase domain of METAP1 in a process requiring GTP hydrolysis. GTP/GDP exchange is required for release of active METAP1. This Rattus norvegicus (Rat) protein is Zinc-regulated GTPase metalloprotein activator 1 (Zng1).